Reading from the N-terminus, the 284-residue chain is NAD kinase (284 aa).

Catalysis depends on D70, which acts as the Proton acceptor. NAD(+) contacts are provided by residues 70–71 (DG), 139–140 (NE), K167, D169, L177, 180–185 (TAYNLS), and Q236.

Belongs to the NAD kinase family. The cofactor is a divalent metal cation.

Its subcellular location is the cytoplasm. It catalyses the reaction NAD(+) + ATP = ADP + NADP(+) + H(+). Involved in the regulation of the intracellular balance of NAD and NADP, and is a key enzyme in the biosynthesis of NADP. Catalyzes specifically the phosphorylation on 2'-hydroxyl of the adenosine moiety of NAD to yield NADP. This chain is NAD kinase, found in Helicobacter pylori (strain J99 / ATCC 700824) (Campylobacter pylori J99).